Reading from the N-terminus, the 148-residue chain is RQAARVCSTRFQPENWNIDPIQRRNNCYNYATNIQTNTFAQPGRASGRRYRENVGGEVYSACLRDGLTGLRAPDAGTECLIALVVWPGEDYHFYRLDNNGYWSHKSGRTEARNTDDSGDPIIDPRTADRGPYSDFVGWLGVGPRARVN.

The interval 105 to 128 (KSGRTEARNTDDSGDPIIDPRTAD) is disordered.

In terms of tissue distribution, component of the acid-insoluble organic matrix of the calcified shell.

It is found in the secreted. The chain is Insoluble matrix shell protein 1 from Ruditapes philippinarum (Japanese carpet shell).